Here is a 353-residue protein sequence, read N- to C-terminus: MTIALGKFTKDENDLFDIMDDWLRRDRFVFVGWSGLLLFPCAYFALGGWFTGTTFVTSWYTHGLASSYLEGCNFLTAAVSTPANSLAHSLLLLWGPEAQGDFTRWCQLGGLWTFVALHGAFALIGFMLRQFELARSVQLRPYNAIAFSGPIAVFVSVFLIYPLGQSGWFFAPSFGVAAIFRFILFFQGFHNWTLNPFHMMGVAGVLGAALLCAIHGATVENTLFEDGDGANTFRAFNPTQAEETYSMVTANRFWSQIFGVAFSNKRWLHFFMLFVPVTGLWMSALGVVGLALNLRAYDFVSQEIRAAEDPEFETFYTKNILLNEGIRAWMAAQDQPHENLIFPEEVLPRGNAL.

Thr2 carries the post-translational modification N-acetylthreonine. The residue at position 2 (Thr2) is a Phosphothreonine. A helical membrane pass occupies residues 41–61 (CAYFALGGWFTGTTFVTSWYT). Position 118 (His118) interacts with chlorophyll a. Residues 125–141 (GFMLRQFELARSVQLRP) form a helical membrane-spanning segment. Residues Gln130 and Asn143 each contribute to the pheophytin a site. Residues 153–166 (VFVSVFLIYPLGQS) traverse the membrane as a helical segment. Position 198 (His198) interacts with chlorophyll a. A helical membrane pass occupies residues 208 to 228 (AALLCAIHGATVENTLFEDGD). A plastoquinone contacts are provided by His215 and Phe262. His215 provides a ligand contact to Fe cation. His269 contributes to the Fe cation binding site. A helical transmembrane segment spans residues 279–295 (GLWMSALGVVGLALNLR).

It belongs to the reaction center PufL/M/PsbA/D family. As to quaternary structure, PSII is composed of 1 copy each of membrane proteins PsbA, PsbB, PsbC, PsbD, PsbE, PsbF, PsbH, PsbI, PsbJ, PsbK, PsbL, PsbM, PsbT, PsbX, PsbY, PsbZ, Psb30/Ycf12, at least 3 peripheral proteins of the oxygen-evolving complex and a large number of cofactors. It forms dimeric complexes. The D1/D2 heterodimer binds P680, chlorophylls that are the primary electron donor of PSII, and subsequent electron acceptors. It shares a non-heme iron and each subunit binds pheophytin, quinone, additional chlorophylls, carotenoids and lipids. There is also a Cl(-1) ion associated with D1 and D2, which is required for oxygen evolution. The PSII complex binds additional chlorophylls, carotenoids and specific lipids. serves as cofactor.

It localises to the plastid. The protein localises to the chloroplast thylakoid membrane. The enzyme catalyses 2 a plastoquinone + 4 hnu + 2 H2O = 2 a plastoquinol + O2. Its function is as follows. Photosystem II (PSII) is a light-driven water:plastoquinone oxidoreductase that uses light energy to abstract electrons from H(2)O, generating O(2) and a proton gradient subsequently used for ATP formation. It consists of a core antenna complex that captures photons, and an electron transfer chain that converts photonic excitation into a charge separation. The D1/D2 (PsbA/PsbD) reaction center heterodimer binds P680, the primary electron donor of PSII as well as several subsequent electron acceptors. D2 is needed for assembly of a stable PSII complex. This is Photosystem II D2 protein from Glycine max (Soybean).